The primary structure comprises 184 residues: ATP-dependent protease subunit HslV (184 aa).

T12 is an active-site residue. A166, C169, and T172 together coordinate Na(+).

Belongs to the peptidase T1B family. HslV subfamily. As to quaternary structure, a double ring-shaped homohexamer of HslV is capped on each side by a ring-shaped HslU homohexamer. The assembly of the HslU/HslV complex is dependent on binding of ATP.

Its subcellular location is the cytoplasm. The enzyme catalyses ATP-dependent cleavage of peptide bonds with broad specificity.. Allosterically activated by HslU binding. Its function is as follows. Protease subunit of a proteasome-like degradation complex believed to be a general protein degrading machinery. This is ATP-dependent protease subunit HslV from Nitrobacter hamburgensis (strain DSM 10229 / NCIMB 13809 / X14).